A 227-amino-acid polypeptide reads, in one-letter code: uncharacterized protein (227 aa).

2 helical membrane-spanning segments follow: residues 13–35 (CVRA…FAFS) and 155–177 (IFFR…MVFL). The tract at residues 192 to 227 (GDARPRPAGPQGTARSRTDEAQVSPGTPPECPVSVF) is disordered. Pro residues predominate over residues 217–227 (GTPPECPVSVF).

The protein localises to the cell membrane. This is an uncharacterized protein from Treponema pallidum (strain Nichols).